We begin with the raw amino-acid sequence, 92 residues long: Small ribosomal subunit protein uS19 (92 aa).

Belongs to the universal ribosomal protein uS19 family.

Its function is as follows. Protein S19 forms a complex with S13 that binds strongly to the 16S ribosomal RNA. The chain is Small ribosomal subunit protein uS19 from Acidiphilium cryptum (strain JF-5).